Here is an 855-residue protein sequence, read N- to C-terminus: Suppressor of tumorigenicity 14 protein (855 aa).

Residues 1-20 (MGSDRARKGGGGPKDFGAGL) form a disordered region. Topologically, residues 1 to 55 (MGSDRARKGGGGPKDFGAGLKYNSRHEKVNGLEEGVEFLPVNNVKKVEKHGPGRW) are cytoplasmic. A helical; Signal-anchor for type II membrane protein transmembrane segment spans residues 56–76 (VVLAAVLIGLLLVLLGIGFLV). Residues 77-855 (WHLQYRDVRV…RDWIKENTGV (779 aa)) are Extracellular-facing. One can recognise an SEA domain in the interval 86 to 203 (VQKVFNGYMR…TSVVAFPTDS (118 aa)). N-linked (GlcNAc...) asparagine glycosylation is present at asparagine 109. Cysteine 214 and cysteine 244 are disulfide-bonded. CUB domains lie at 214 to 334 (CSFG…FFQL) and 340 to 447 (CGGR…YLSY). Asparagine 302 carries N-linked (GlcNAc...) asparagine glycosylation. Disulfide bonds link cysteine 340/cysteine 366, cysteine 397/cysteine 410, cysteine 453/cysteine 464, cysteine 459/cysteine 477, cysteine 471/cysteine 486, cysteine 488/cysteine 501, cysteine 496/cysteine 514, cysteine 508/cysteine 523, cysteine 525/cysteine 537, cysteine 532/cysteine 550, cysteine 544/cysteine 559, cysteine 567/cysteine 579, cysteine 574/cysteine 593, cysteine 587/cysteine 602, and cysteine 641/cysteine 657. LDL-receptor class A domains lie at 452–487 (PCPGQFTCRTGRCIRKELRCDGWADCTDHSDELNCS), 487–524 (SCDAGHQFTCKNKFCKPLFWVCDSVNDCGDNSDEQGCS), 524–560 (SCPAQTFRCSNGKCLSKSQQCNGKDDCGDGSDEASCP), and 566–603 (TCTKHTYRCLNGLCLSKGNPECDGKEDCSDGSDEKDCD). Asparagine 485 is a glycosylation site (N-linked (GlcNAc...) asparagine). The 240-residue stretch at 615–854 (VVGGTDADEG…FRDWIKENTG (240 aa)) folds into the Peptidase S1 domain. Catalysis depends on charge relay system residues histidine 656 and aspartate 711. Asparagine 772 carries an N-linked (GlcNAc...) asparagine glycan. Intrachain disulfides connect cysteine 776/cysteine 790 and cysteine 801/cysteine 830. Serine 805 serves as the catalytic Charge relay system.

It belongs to the peptidase S1 family. As to quaternary structure, interacts with CDCP1. May interact with TMEFF1. Interacts with iripin-3, a serine protease inhibitor from Ixodes ricinus saliva. Interacts with iripin-1, a serine protease inhibitor from Ixodes ricinus saliva.

It localises to the membrane. The enzyme catalyses Cleaves various synthetic substrates with Arg or Lys at the P1 position and prefers small side-chain amino acids, such as Ala and Gly, at the P2 position.. Functionally, exhibits trypsin-like activity as defined by cleavage of synthetic substrates with Arg or Lys as the P1 site. Involved in the terminal differentiation of keratinocytes through prostasin (PRSS8) activation and filaggrin (FLG) processing. Proteolytically cleaves and therefore activates TMPRSS13. The polypeptide is Suppressor of tumorigenicity 14 protein (ST14) (Homo sapiens (Human)).